An 80-amino-acid polypeptide reads, in one-letter code: MEARVLWLLVVVLVLGSSSLAVAYQGLATNLCEVPPKDRVDCGYPEITSEQCVNRGCCFDSSIHGVPWCFKPLQDTECRF.

An N-terminal signal peptide occupies residues 1–23 (MEARVLWLLVVVLVLGSSSLAVA). Residues 30-73 (NLCEVPPKDRVDCGYPEITSEQCVNRGCCFDSSIHGVPWCFKPL) enclose the P-type domain. 3 cysteine pairs are disulfide-bonded: C32-C58, C42-C57, and C52-C69.

Monomer. Homodimer; disulfide-linked.

It is found in the secreted. It localises to the extracellular space. Its subcellular location is the extracellular matrix. The protein localises to the cytoplasm. Its function is as follows. Involved in the maintenance and repair of the intestinal mucosa. Promotes the mobility of epithelial cells in healing processes (motogen). The polypeptide is Trefoil factor 3 (TFF3) (Canis lupus familiaris (Dog)).